The chain runs to 896 residues: MSSFIGWKKNSNSGGTPGASPTSSSPLNSTISNANSVSGLGPLGSISNTSSSSLSSSFQPIQIVNSNNNSPPLSSSSSSTSTYSTPNSSNDTIGKSSSSSVASAAAAGASSTSTYSSSSSLIDTSQFNNNYVGNIFGGQPINPNTEFGSSILNKFSKYLLNKGFNTEGIFKPHPELDNEIQNVKKNLIKDLSIGDMEQASLSTLTQNPLVIGEIMKQYLALLPEPLFSYQLYDSFLLTHSILSPTDRIWAYRFLLLYLPVGFRGAIKSVLGLLSRVHQCSESSKMNSESLAKIFSPVFLRPAEDMYYMKSDQSTLEEIVKLWIEEFDMISKPPTNPNPNSKVTILGTNNTLSQLQQQSNQHSSLPNISSLSSNLIQQQLQQQQQQQQQSHPTIGMSKITSSLSSSSLQVNLQTSPKSPQSPKLLLPTIPKDDQQQMTIVKQKPILSKPTPTTTPTLTPQTTNPPPVPASTLDNNNSNNNNNNNNNNSNNNNNNNNNNNNNNNNNNNITPNGSPLINKRLSIGGFALSPPGASTSFSSLSEQEVEDKVRKIKVSIDTMVSEQALLLIKNLLKSIEKEFNYNHIIKFSSIIRDAKKHMNESSEKQLSLTKANIREFIQEYPKPMSYNLLVSSIPKLDTTNFTEQEKKANDIKRASQVAADEISDYIYYFKLKISTFQLKEQVISTAQIFSKLKSILESPPPSLPTGSSWSDFENNSSNNNININNNINNSSSNNNNNNSSPNSSPLMGRLKTSNGLNSSSNSNVTPPTENQISADKATIRIIEVCSQEIKSRFGSMRSNLERVDINGAFEIGKHSRNVKAVLNDIYVQCKLIPPPDIKALPPGEDQLTTLRKALPPLFDRFVTQIDELTQHVFNNKASPEEITIIVDKLLFINRSLSM.

A disordered region spans residues 1–97; it reads MSSFIGWKKN…SSNDTIGKSS (97 aa). Low complexity predominate over residues 10-26; it reads NSNSGGTPGASPTSSSP. The segment covering 27–38 has biased composition (polar residues); sequence LNSTISNANSVS. 2 stretches are compositionally biased toward low complexity: residues 45–57 and 65–97; these read SISNTSSSSLSSS and NSNNNSPPLSSSSSSTSTYSTPNSSNDTIGKSS. Positions 139–330 constitute a Rho-GAP domain; it reads QPINPNTEFG…LWIEEFDMIS (192 aa). Composition is skewed to low complexity over residues 375 to 391, 400 to 427, 448 to 460, and 473 to 506; these read IQQQLQQQQQQQQQSHP, SSLSSSSLQVNLQTSPKSPQSPKLLLPT, PTPTTTPTLTPQT, and NNNSNNNNNNNNNNSNNNNNNNNNNNNNNNNNNN. Disordered regions lie at residues 375–514 and 701–770; these read IQQQ…GSPL and LPTG…ENQI. Residues 702–711 show a composition bias toward polar residues; it reads PTGSSWSDFE. Composition is skewed to low complexity over residues 712 to 743 and 751 to 761; these read NNSSNNNININNNINNSSSNNNNNNSSPNSSP and SNGLNSSSNSN.

The protein localises to the cytoplasm. Its function is as follows. Rho GTPase-activating protein involved in the signal transduction pathway. The protein is Rho GTPase-activating protein gacM (gacM) of Dictyostelium discoideum (Social amoeba).